The sequence spans 375 residues: DNA replication and repair protein RecF (375 aa).

An ATP-binding site is contributed by 34 to 41 (GDNGAGKT).

This sequence belongs to the RecF family.

The protein resides in the cytoplasm. Its function is as follows. The RecF protein is involved in DNA metabolism; it is required for DNA replication and normal SOS inducibility. RecF binds preferentially to single-stranded, linear DNA. It also seems to bind ATP. In Rhizobium rhizogenes (strain K84 / ATCC BAA-868) (Agrobacterium radiobacter), this protein is DNA replication and repair protein RecF.